The chain runs to 482 residues: tRNA sulfurtransferase (482 aa).

Residues 61-165 (AAIVAELTRI…DERLILVTAR (105 aa)) form the THUMP domain. ATP is bound by residues 183 to 184 (LI), Lys265, Gly287, and Gln296. A disulfide bridge connects residues Cys344 and Cys456. The 79-residue stretch at 404 to 482 (FSHNDVILDI…GFKNVKVYRP (79 aa)) folds into the Rhodanese domain. Residue Cys456 is the Cysteine persulfide intermediate of the active site.

This sequence belongs to the ThiI family.

It localises to the cytoplasm. The catalysed reaction is [ThiI sulfur-carrier protein]-S-sulfanyl-L-cysteine + a uridine in tRNA + 2 reduced [2Fe-2S]-[ferredoxin] + ATP + H(+) = [ThiI sulfur-carrier protein]-L-cysteine + a 4-thiouridine in tRNA + 2 oxidized [2Fe-2S]-[ferredoxin] + AMP + diphosphate. It catalyses the reaction [ThiS sulfur-carrier protein]-C-terminal Gly-Gly-AMP + S-sulfanyl-L-cysteinyl-[cysteine desulfurase] + AH2 = [ThiS sulfur-carrier protein]-C-terminal-Gly-aminoethanethioate + L-cysteinyl-[cysteine desulfurase] + A + AMP + 2 H(+). The protein operates within cofactor biosynthesis; thiamine diphosphate biosynthesis. Its function is as follows. Catalyzes the ATP-dependent transfer of a sulfur to tRNA to produce 4-thiouridine in position 8 of tRNAs, which functions as a near-UV photosensor. Also catalyzes the transfer of sulfur to the sulfur carrier protein ThiS, forming ThiS-thiocarboxylate. This is a step in the synthesis of thiazole, in the thiamine biosynthesis pathway. The sulfur is donated as persulfide by IscS. The sequence is that of tRNA sulfurtransferase from Erwinia tasmaniensis (strain DSM 17950 / CFBP 7177 / CIP 109463 / NCPPB 4357 / Et1/99).